A 229-amino-acid polypeptide reads, in one-letter code: Uracil-DNA glycosylase (229 aa).

Asp-65 serves as the catalytic Proton acceptor.

It belongs to the uracil-DNA glycosylase (UDG) superfamily. UNG family.

The protein resides in the cytoplasm. The catalysed reaction is Hydrolyzes single-stranded DNA or mismatched double-stranded DNA and polynucleotides, releasing free uracil.. In terms of biological role, excises uracil residues from the DNA which can arise as a result of misincorporation of dUMP residues by DNA polymerase or due to deamination of cytosine. This Limosilactobacillus fermentum (strain NBRC 3956 / LMG 18251) (Lactobacillus fermentum) protein is Uracil-DNA glycosylase.